The chain runs to 282 residues: MVIFKTVNDVRSQVKEWKKQGLKVGLVPTMGYLHEGHESLIRKASKENDKVVVSIFVNPTQFGKNEDLGSYPRDLERDIEVCTRGRATAIFNPEVEEMYCDNASTFVNITGLTEGLCGASRPIHFRGVCTVVSKLFNIIPADRAYFGEKDAQQLAVIKRMVRDLNIDIDVVGCPIIREEDGLAKSSRNTYLSLEERSSATILNKSLTLAKEALNNGERDSLKIIEIISKNINTCNLAKIDYVEVVDSLSLQRVNYIEKSVLVAIAVFIGKTRLIDNFTFELQ.

30-37 (MGYLHEGH) contacts ATP. Residue histidine 37 is the Proton donor of the active site. Residue glutamine 61 coordinates (R)-pantoate. Residue glutamine 61 participates in beta-alanine binding. 147–150 (GEKD) contacts ATP. Glutamine 153 is a (R)-pantoate binding site. ATP contacts are provided by residues isoleucine 176 and 184 to 187 (KSSR).

The protein belongs to the pantothenate synthetase family. As to quaternary structure, homodimer.

It localises to the cytoplasm. It catalyses the reaction (R)-pantoate + beta-alanine + ATP = (R)-pantothenate + AMP + diphosphate + H(+). It functions in the pathway cofactor biosynthesis; (R)-pantothenate biosynthesis; (R)-pantothenate from (R)-pantoate and beta-alanine: step 1/1. Catalyzes the condensation of pantoate with beta-alanine in an ATP-dependent reaction via a pantoyl-adenylate intermediate. The chain is Pantothenate synthetase from Enterococcus faecalis (strain ATCC 700802 / V583).